A 367-amino-acid chain; its full sequence is Beta sliding clamp (367 aa).

The protein belongs to the beta sliding clamp family. Forms a ring-shaped head-to-tail homodimer around DNA which binds and tethers DNA polymerases and other proteins to the DNA. The DNA replisome complex has a single clamp-loading complex (3 tau and 1 each of delta, delta', psi and chi subunits) which binds 3 Pol III cores (1 core on the leading strand and 2 on the lagging strand) each with a beta sliding clamp dimer. Additional proteins in the replisome are other copies of gamma, psi and chi, Ssb, DNA helicase and RNA primase.

The protein localises to the cytoplasm. Its function is as follows. Confers DNA tethering and processivity to DNA polymerases and other proteins. Acts as a clamp, forming a ring around DNA (a reaction catalyzed by the clamp-loading complex) which diffuses in an ATP-independent manner freely and bidirectionally along dsDNA. Initially characterized for its ability to contact the catalytic subunit of DNA polymerase III (Pol III), a complex, multichain enzyme responsible for most of the replicative synthesis in bacteria; Pol III exhibits 3'-5' exonuclease proofreading activity. The beta chain is required for initiation of replication as well as for processivity of DNA replication. The chain is Beta sliding clamp (dnaN) from Pseudomonas putida (strain ATCC 47054 / DSM 6125 / CFBP 8728 / NCIMB 11950 / KT2440).